The following is an 898-amino-acid chain: MARRRLPDRPPNGIGAGERPRLVPRPINVQDSVNRLTKPFRVPYKNTHIPPAAGRIATGSDNIVGGRSLRKRSATVCYSGLDINADEAEYNSQDISFSQLTKRRKDALSAQRLAKDPTRLSHIQYTLRRSFTVPIKGYVQRHSLPLTLGMKKKITPEPRPLHDPTDEFAIVLYDPSVDGEMIVHDTSMDNKEEESKKMIKSTQEKDNINKEKNSQEERPTQRIGRHPALMTNGVRNKPLRELLGDSENSAENKKKFASVPVVIDPKLAKILRPHQVEGVRFLYRCVTGLVMKDYLEAEAFNTSSEDPLKSDEKALTESQKTEQNNRGAYGCIMADEMGLGKTLQCIALMWTLLRQGPQGKRLIDKCIIVCPSSLVNNWANELIKWLGPNTLTPLAVDGKKSSMGGGNTTVSQAIHAWAQAQGRNIVKPVLIISYETLRRNVDQLKNCNVGLMLADEGHRLKNGDSLTFTALDSISCPRRVILSGTPIQNDLSEYFALLSFSNPGLLGSRAEFRKNFENPILRGRDADATDKEITKGEAQLQKLSTIVSKFIIRRTNDILAKYLPCKYEHVIFVNLKPLQNELYNKLIKSREVKKVVKGVGGSQPLRAIGILKKLCNHPNLLNFEDEFDDEDDLELPDDYNMPGSKARDVQTKYSAKFSILERFLHKIKTESDDKIVLISNYTQTLDLIEKMCRYKHYSAVRLDGTMSINKRQKLVDRFNDPEGQEFIFLLSSKAGGCGINLIGANRLILMDPDWNPAADQQALARVWRDGQKKDCFIYRFISTGTIEEKIFQRQSMKMSLSSCVVDAKEDVERLFSSDNLRQLFQKNENTICETHETYHCKRCNAQGKQLKRAPAMLYGDATTWNHLNHDALEKTNDHLLKNEHHYNDISFAFQYISH.

The segment at 1-22 is disordered; sequence MARRRLPDRPPNGIGAGERPRL. 2 short sequence motifs (nuclear localization signal) span residues 21–25 and 41–45; these read RLVPR and RVPYK. Basic and acidic residues-rich tracts occupy residues 188–220 and 306–315; these read MDNKEEESKKMIKSTQEKDNINKEKNSQEERPT and DPLKSDEKAL. Disordered stretches follow at residues 188–238 and 302–321; these read MDNK…RNKP and TSSEDPLKSDEKALTESQKT. The Helicase ATP-binding domain maps to 322–504; that stretch reads EQNNRGAYGC…FALLSFSNPG (183 aa). 335–342 provides a ligand contact to ATP; sequence DEMGLGKT. The DEGH box signature appears at 455–458; the sequence is DEGH. A Helicase C-terminal domain is found at 659–812; sequence ILERFLHKIK…CVVDAKEDVE (154 aa).

Belongs to the SNF2/RAD54 helicase family. Homohexamer. Interacts with RAD51; RAD51-ssDNA filaments do not interact autonomously with dsDNA but do so robustly in the presence of RAD54.

The protein localises to the nucleus. It catalyses the reaction ATP + H2O = ADP + phosphate + H(+). In terms of biological role, plays an essential role in homologous recombination (HR) which is a major pathway for repairing DNA double-strand breaks (DSBs), single-stranded DNA (ssDNA) gaps, and stalled or collapsed replication forks. Acts as a molecular motor during the homology search and guides RAD51 ssDNA along a donor dsDNA thereby changing the homology search from the diffusion-based mechanism to a motor-guided mechanism. Also plays an essential role in RAD51-mediated synaptic complex formation which consists of three strands encased in a protein filament formed once homology is recognized. Once DNA strand exchange occured, dissociates RAD51 from nucleoprotein filaments formed on dsDNA. This is DNA repair and recombination protein RAD54 (RAD54) from Saccharomyces cerevisiae (strain ATCC 204508 / S288c) (Baker's yeast).